A 1368-amino-acid chain; its full sequence is Mediator of RNA polymerase II transcription subunit 23 (1368 aa).

Residues 1343–1368 form a disordered region; that stretch reads VPPQAMNSGSPAPQSNQVPVSLPVTQ. Residues 1347–1368 show a composition bias toward polar residues; the sequence is AMNSGSPAPQSNQVPVSLPVTQ.

Belongs to the Mediator complex subunit 23 family. As to quaternary structure, interacts with ELK1. Component of the Mediator complex, which is composed of MED1, MED4, MED6, MED7, MED8, MED9, MED10, MED11, MED12, MED13, MED13L, MED14, MED15, MED16, MED17, MED18, MED19, MED20, MED21, MED22, MED23, MED24, MED25, MED26, MED27, MED29, MED30, MED31, CCNC, CDK8 and CDC2L6/CDK11. The MED12, MED13, CCNC and CDK8 subunits form a distinct module termed the CDK8 module. Mediator containing the CDK8 module is less active than Mediator lacking this module in supporting transcriptional activation. Individual preparations of the Mediator complex lacking one or more distinct subunits have been variously termed ARC, CRSP, DRIP, PC2, SMCC and TRAP. Interacts with CEBPB (when not methylated), CTNNB1, and GLI3. Interacts with the adenovirus E1A protein.

Its subcellular location is the nucleus. Its function is as follows. Required for transcriptional activation subsequent to the assembly of the pre-initiation complex. Component of the Mediator complex, a coactivator involved in the regulated transcription of nearly all RNA polymerase II-dependent genes. Mediator functions as a bridge to convey information from gene-specific regulatory proteins to the basal RNA polymerase II transcription machinery. Mediator is recruited to promoters by direct interactions with regulatory proteins and serves as a scaffold for the assembly of a functional pre-initiation complex with RNA polymerase II and the general transcription factors. Required for transcriptional activation by adenovirus E1A protein. Required for ELK1-dependent transcriptional activation in response to activated Ras signaling. The sequence is that of Mediator of RNA polymerase II transcription subunit 23 (MED23) from Homo sapiens (Human).